Reading from the N-terminus, the 172-residue chain is uncharacterized protein (172 aa).

3 consecutive transmembrane segments (helical) span residues 16–36, 68–88, and 89–109; these read IMIV…AYLI, SFLI…AGEL, and VISH…YIII.

It is found in the cell membrane. This is an uncharacterized protein from Methanocaldococcus jannaschii (strain ATCC 43067 / DSM 2661 / JAL-1 / JCM 10045 / NBRC 100440) (Methanococcus jannaschii).